Consider the following 268-residue polypeptide: Myeloid leukemia factor 1 (268 aa).

Serine 6, serine 8, and serine 32 each carry phosphoserine. The interval 50–125 (RVHNRRGHND…IGDEPPKVFQ (76 aa)) is interaction with COPS3. Positions 208 to 268 (PGRHNLENTR…KGSSVKSNKK (61 aa)) are disordered. Composition is skewed to basic and acidic residues over residues 226-237 (PGSRELKRREKP) and 244-257 (EHGR…DKLH).

This sequence belongs to the MLF family. In terms of assembly, interacts with CENPU. Also interacts with NRBP1/MADM, YWHAZ/14-3-3-zeta and HNRPUL2/MANP. NRBP1 recruits a serine kinase which phosphorylates both itself and MLF1. Phosphorylated MLF1 then binds to YWHAZ and is retained in the cytoplasm. Retained in the nucleus by binding to HNRPUL2. Binds to COPS3/CSN3 which is required for suppression of COP1 and activation of p53. In terms of processing, phosphorylation is required for binding to YWHAZ.

It localises to the cytoplasm. The protein resides in the nucleus. It is found in the cell projection. Its subcellular location is the cilium. The protein localises to the cytoskeleton. It localises to the cilium basal body. Functionally, involved in lineage commitment of primary hemopoietic progenitors by restricting erythroid formation and enhancing myeloid formation. Interferes with erythropoietin-induced erythroid terminal differentiation by preventing cells from exiting the cell cycle through suppression of CDKN1B/p27Kip1 levels. Suppresses COP1 activity via CSN3 which activates p53 and induces cell cycle arrest. Binds DNA and affects the expression of a number of genes so may function as a transcription factor in the nucleus. This is Myeloid leukemia factor 1 (MLF1) from Pongo abelii (Sumatran orangutan).